We begin with the raw amino-acid sequence, 257 residues long: Phosphonates import ATP-binding protein PhnC (257 aa).

An ABC transporter domain is found at 4–248 (IEFKDVRKVY…AFNEIYGRSI (245 aa)). 37–44 (GLSGSGKS) contributes to the ATP binding site.

Belongs to the ABC transporter superfamily. Phosphonates importer (TC 3.A.1.9.1) family. In terms of assembly, the complex is composed of two ATP-binding proteins (PhnC), two transmembrane proteins (PhnE) and a solute-binding protein (PhnD).

The protein resides in the cell membrane. It carries out the reaction phosphonate(out) + ATP + H2O = phosphonate(in) + ADP + phosphate + H(+). In terms of biological role, part of the ABC transporter complex PhnCDE involved in phosphonates import. Responsible for energy coupling to the transport system. The protein is Phosphonates import ATP-binding protein PhnC of Staphylococcus saprophyticus subsp. saprophyticus (strain ATCC 15305 / DSM 20229 / NCIMB 8711 / NCTC 7292 / S-41).